Reading from the N-terminus, the 128-residue chain is Probable 4-amino-4-deoxy-L-arabinose-phosphoundecaprenol flippase subunit ArnF (128 aa).

The helical transmembrane segment at 1–21 (MGLMWGLFSVIIASAAQLSLG) threads the bilayer. Residues 22-35 (YAASHLPPMTQFWD) lie on the Periplasmic side of the membrane. The chain crosses the membrane as a helical span at residues 36–56 (FIAAFFAFGPGARMLVVGLVG). Residues 57–76 (YLLSVFCWYKALHQLALSKA) lie on the Cytoplasmic side of the membrane. A helical membrane pass occupies residues 77 to 97 (YALLSMSYVLVWIASMVLPGW). Residues 98–100 (EGT) lie on the Periplasmic side of the membrane. A helical transmembrane segment spans residues 101–121 (FSLKALLGVACIMSGLMLIFL). Over 122 to 128 (PTTKQRY) the chain is Cytoplasmic.

This sequence belongs to the ArnF family. Heterodimer of ArnE and ArnF.

The protein resides in the cell inner membrane. It functions in the pathway bacterial outer membrane biogenesis; lipopolysaccharide biosynthesis. In terms of biological role, translocates 4-amino-4-deoxy-L-arabinose-phosphoundecaprenol (alpha-L-Ara4N-phosphoundecaprenol) from the cytoplasmic to the periplasmic side of the inner membrane. This is Probable 4-amino-4-deoxy-L-arabinose-phosphoundecaprenol flippase subunit ArnF from Escherichia fergusonii (strain ATCC 35469 / DSM 13698 / CCUG 18766 / IAM 14443 / JCM 21226 / LMG 7866 / NBRC 102419 / NCTC 12128 / CDC 0568-73).